The sequence spans 444 residues: Serine--tRNA ligase (444 aa).

243 to 245 (TAE) provides a ligand contact to L-serine. 274 to 276 (RSE) is an ATP binding site. Glu-297 lines the L-serine pocket. Residue 361–364 (EISS) coordinates ATP. Ser-397 is a binding site for L-serine.

This sequence belongs to the class-II aminoacyl-tRNA synthetase family. Type-1 seryl-tRNA synthetase subfamily. In terms of assembly, homodimer. The tRNA molecule binds across the dimer.

Its subcellular location is the cytoplasm. The catalysed reaction is tRNA(Ser) + L-serine + ATP = L-seryl-tRNA(Ser) + AMP + diphosphate + H(+). The enzyme catalyses tRNA(Sec) + L-serine + ATP = L-seryl-tRNA(Sec) + AMP + diphosphate + H(+). Its pathway is aminoacyl-tRNA biosynthesis; selenocysteinyl-tRNA(Sec) biosynthesis; L-seryl-tRNA(Sec) from L-serine and tRNA(Sec): step 1/1. Catalyzes the attachment of serine to tRNA(Ser). Is also able to aminoacylate tRNA(Sec) with serine, to form the misacylated tRNA L-seryl-tRNA(Sec), which will be further converted into selenocysteinyl-tRNA(Sec). In Acidobacterium capsulatum (strain ATCC 51196 / DSM 11244 / BCRC 80197 / JCM 7670 / NBRC 15755 / NCIMB 13165 / 161), this protein is Serine--tRNA ligase.